A 141-amino-acid polypeptide reads, in one-letter code: Hemoglobin subunit alpha (141 aa).

The Globin domain occupies 1–141 (VLSAADKTNV…VSTVLTSKYR (141 aa)). The residue at position 3 (Ser-3) is a Phosphoserine. Residue Lys-7 is modified to N6-succinyllysine. Thr-8 carries the post-translational modification Phosphothreonine. Residue Lys-11 is modified to N6-succinyllysine. Lys-16 is subject to N6-acetyllysine; alternate. The residue at position 16 (Lys-16) is an N6-succinyllysine; alternate. The residue at position 35 (Ser-35) is a Phosphoserine. Lys-40 is subject to N6-succinyllysine. Residue Ser-49 is modified to Phosphoserine. His-58 is a binding site for O2. Heme b is bound at residue His-87. A Phosphoserine modification is found at Ser-102. Thr-108 carries the phosphothreonine modification. 2 positions are modified to phosphoserine: Ser-124 and Ser-131. A phosphothreonine mark is found at Thr-134 and Thr-137. Ser-138 carries the post-translational modification Phosphoserine.

This sequence belongs to the globin family. Heterotetramer of two alpha chains and two beta chains. In terms of tissue distribution, red blood cells.

Functionally, involved in oxygen transport from the lung to the various peripheral tissues. The chain is Hemoglobin subunit alpha from Sciurus carolinensis (Eastern gray squirrel).